The primary structure comprises 192 residues: DNA dC-&gt;dU-editing enzyme APOBEC-3Ca (192 aa).

Positions 15 to 141 (IDPNTFRFHF…PNYQEGLCKL (127 aa)) constitute a CMP/dCMP-type deaminase domain. His-69 serves as a coordination point for Zn(2+). The Proton donor role is filled by Glu-71. Residues Cys-100 and Cys-103 each contribute to the Zn(2+) site.

This sequence belongs to the cytidine and deoxycytidylate deaminase family. In terms of assembly, (Microbial infection) Interacts with feline foamy virus protein Bet. This interaction does not induce APOBEC3Ca degradation but prevents its dimerization and incorporation into the virion. It depends on Zn(2+) as a cofactor.

The protein resides in the nucleus. The protein localises to the cytoplasm. The catalysed reaction is a 2'-deoxycytidine in single-stranded DNA + H2O + H(+) = a 2'-deoxyuridine in single-stranded DNA + NH4(+). In terms of biological role, DNA deaminase (cytidine deaminase) which acts as an inhibitor of retrovirus replication and retrotransposon mobility via deaminase-dependent and -independent mechanisms. Selectively targets single-stranded DNA and does not deaminate double-stranded DNA or single- or double-stranded RNA. Does not reduce infectivity of foamy feline virus, feline immunodeficiency virus or feline leukemia virus. The protein is DNA dC-&gt;dU-editing enzyme APOBEC-3Ca of Felis catus (Cat).